The sequence spans 678 residues: MGSVADDAEITGPLLAAAAGGGGDSAAAAGVERVPAWREQVTVRGIVVSAVLGVLFCLITHKLNLTVGVIPSLNVSAGLLGYFLVRSWTAVLGRLGFVIAPFTKQENTVIQTCVVACYGLAFSGGFGSYMLAMDQKTYELIGPDYPGNRAIDVMNPSLGWMIGFMFVVSFLGLFSLVALRKVMVIDYKLTYPSGTATAMLINSFHTTSGAELAEKQVSCLGKYLSISFFWNCFKWFFSGVGDSCGFDNFPSLGLAAFKNTFYFDFSPTYIGCGLICPHIVNCSTLLGAIISWGFLWPYISTKAGDWYPANLGSNDFKGLYGYKVFISVSVILGDGLYNLIKIIYATIKEVMNARSKQGRLPLVRVHDDDEGSKLSAEEKLRNDTFLKDRIPSWLAGSGYVGLAAISTATVPMIFPQVKWYLVLCAYVVAPLLAFCNSYGCGLTDWNLASTYGKIGLFIFASLVGRSGGVIAGLAACGVMMSIVSTAADLMQDFRTGYLTLSSPRSMFVSQLIGTTLGCIIAPLTFWLYWTAFDIGNPDGMFKAPYAVIYREMSILGVEGFSALPQHCLAICSVFFVAAILINLLRDVTPKSVSKFIPLPMAMAVPFYIGAYFAIDMFVGTVILFVWERVNRKESEDFAGAIASGLICGDGIWSVPSAILSIMRIDPPMCMYFKPSLTS.

The next 14 membrane-spanning stretches (helical) occupy residues 41-61, 65-85, 113-133, 158-178, 226-246, 279-299, 324-344, 394-414, 419-439, 467-487, 512-532, 561-581, 606-626, and 641-661; these read VTVR…LITH, LTVG…YFLV, CVVA…MLAM, LGWM…SLVA, ISFF…SCGF, IVNC…WPYI, VFIS…KIIY, LAGS…PMIF, WYLV…NSYG, GGVI…STAA, IGTT…WTAF, SALP…AILI, FYIG…LFVW, and IASG…ILSI.

It belongs to the YSL (TC 2.A.67.2) family. Expressed in roots and leaves.

The protein localises to the membrane. In terms of biological role, may be involved in the transport of nicotianamine-chelated metals. The protein is Probable metal-nicotianamine transporter YSL6 (YSL6) of Oryza sativa subsp. japonica (Rice).